The primary structure comprises 197 residues: uncharacterized protein (197 aa).

This is an uncharacterized protein from Methanocaldococcus jannaschii (strain ATCC 43067 / DSM 2661 / JAL-1 / JCM 10045 / NBRC 100440) (Methanococcus jannaschii).